Here is an 860-residue protein sequence, read N- to C-terminus: MMNIKAFTLVSAVERELLMGDRDHISIECVECCGRNLYVGTNDCFIYHFLLEEKAMPTGTATFVATKQLHRHLGFKKPVNELCAASALNRLLVLCDNSITLVNMLNLEPVPSGARIKGATTFAVNESPVNGDPFCVEVCIISVKRRTVQMFLVYEDRVQIVKEVSTPEQPLAVAVDGYFLCLALTTQYIILNYSTGLSQDLFPYCSEEKPPIVKRIGRQEFLLAGPGGLGMFATVAGISQRAPVHWSENVIGAAVCFPYVIALDDEFITVHSMLDQQQKQTLPFKEGHILQDFEGRVIVATSKGVYILVPLPLEKQIQDLLANRRVEEALVLAKGARRNIPKEKFQVMYRRILQQAGFIQFAQLQFLEAKELFRSSQLDVRELISLYPFLLPTSSSFTRSHPPLHEYADLNQLTQGDQEKMAKCKRFLMSYLNEIRSTEVANGYKEDIDTALLKLYAEADHDSLLDLLVTENFCLLTDSAAWLEKHKKYFALGLLYHYNKQDASAVQLWVNIVNGDIQDSTRSDLYEYIVDFLTYCLDQELVWTHADWLLQKSEEIGVQIFTKRPLDEQQQTSFNPDNIISSLKKYPKALVKYLEHLVIDRRLQKEEYHTHLAILYLEEVLRQRVSTGGKDVEATETQAKLRRLLQKSDLYRVHLLKEKVQGAGLPMESAILHGKLGEHEKALHILVHEMGDFSAAEDYCLWSSEGQGAACRQRLFHTLLAMYLRAGPSAQDLTVAAVDLLNHHAREFDVTQVLQLLPDTWSVQLLCPFLMGAMRDSIHARRTTQVALGLAKSENLIYMYDKMKLKGNAVRLSERELCQLCQNPFGEPVFVRYPNGGLVHTHCAASRHTAPSSPSPGTRT.

In terms of domain architecture, CNH spans 24-297 (HISIECVECC…HILQDFEGRV (274 aa)). One copy of the CHCR repeat lies at 564-732 (RPLDEQQQTS…YLRAGPSAQD (169 aa)).

The protein belongs to the TRAP1 family. As to quaternary structure, interacts with TGFBR2 and ACVR2B; in the absence of ligand stimulation. Interacts with TGFBR1, ACVRL1, BMPR1A and ACVR1B; in the absence of ligand stimulation and to a less extent. Interacts with SMAD4; the interaction seems to be mutually exclusive with the interaction of SMAD4 and phosphorylated SMAD2. May interact with ALOX5. Interacts with RAB5C. Interacts with VPS8, VPS11 and VPS16. Component of the putative class C core vacuole/endosome tethering (CORVET) complex; the core of which composed of the class C Vps proteins VPS11, VPS16, VPS18 and VPS33A, is associated with VPS8 and TGFBRAP1.

Its subcellular location is the cytoplasm. The protein resides in the early endosome. Plays a role in the TGF-beta/activin signaling pathway. It associates with inactive heteromeric TGF-beta and activin receptor complexes, mainly through the type II receptor, and is released upon activation of signaling. May recruit SMAD4 to the vicinity of the receptor complex and facilitate its interaction with receptor-regulated Smads, such as SMAD2. In terms of biological role, plays a role in vesicle-mediated protein trafficking of the endocytic membrane transport pathway. Believed to act as a component of the putative CORVET endosomal tethering complexes which is proposed to be involved in the Rab5-to-Rab7 endosome conversion probably implicating MON1A/B, and via binding SNAREs and SNARE complexes to mediate tethering and docking events during SNARE-mediated membrane fusion. The CORVET complex is proposed to function as a Rab5 effector to mediate early endosome fusion probably in specific endosome subpopulations. Functions predominantly in APPL1-containing endosomes and in degradative but not recycling trafficking of endocytosed cargo. This Mus musculus (Mouse) protein is Transforming growth factor-beta receptor-associated protein 1 (Tgfbrap1).